A 311-amino-acid chain; its full sequence is Ribosomal RNA small subunit methyltransferase H (311 aa).

Residues 39–41 (GGH), Asp-59, Phe-87, Asp-102, and His-109 each bind S-adenosyl-L-methionine.

The protein belongs to the methyltransferase superfamily. RsmH family.

It localises to the cytoplasm. It carries out the reaction cytidine(1402) in 16S rRNA + S-adenosyl-L-methionine = N(4)-methylcytidine(1402) in 16S rRNA + S-adenosyl-L-homocysteine + H(+). In terms of biological role, specifically methylates the N4 position of cytidine in position 1402 (C1402) of 16S rRNA. The chain is Ribosomal RNA small subunit methyltransferase H from Porphyromonas gingivalis (strain ATCC 33277 / DSM 20709 / CIP 103683 / JCM 12257 / NCTC 11834 / 2561).